The sequence spans 321 residues: Aldose reductase C (321 aa).

22 to 31 contacts NADP(+); that stretch reads GNQIPSIGLG. The active-site Proton donor is the Tyr-62. His-124 is a substrate binding site. 227-281 lines the NADP(+) pocket; the sequence is SPLGQGKCDFFSNKILKSIAGKYKKSVANVIFKWLNQRGIAAIPKSGNHSRIIEN.

It belongs to the aldo/keto reductase family.

It carries out the reaction an alditol + NAD(+) = an aldose + NADH + H(+). The enzyme catalyses an alditol + NADP(+) = an aldose + NADPH + H(+). In terms of biological role, catalyzes the NADPH-dependent reduction of a wide variety of carbonyl-containing compounds to their corresponding alcohols with a broad range of catalytic efficiencies. The protein is Aldose reductase C (alrC) of Dictyostelium discoideum (Social amoeba).